The primary structure comprises 178 residues: ATP synthase subunit delta (178 aa).

Belongs to the ATPase delta chain family. F-type ATPases have 2 components, F(1) - the catalytic core - and F(0) - the membrane proton channel. F(1) has five subunits: alpha(3), beta(3), gamma(1), delta(1), epsilon(1). F(0) has three main subunits: a(1), b(2) and c(10-14). The alpha and beta chains form an alternating ring which encloses part of the gamma chain. F(1) is attached to F(0) by a central stalk formed by the gamma and epsilon chains, while a peripheral stalk is formed by the delta and b chains.

It localises to the cell inner membrane. F(1)F(0) ATP synthase produces ATP from ADP in the presence of a proton or sodium gradient. F-type ATPases consist of two structural domains, F(1) containing the extramembraneous catalytic core and F(0) containing the membrane proton channel, linked together by a central stalk and a peripheral stalk. During catalysis, ATP synthesis in the catalytic domain of F(1) is coupled via a rotary mechanism of the central stalk subunits to proton translocation. Functionally, this protein is part of the stalk that links CF(0) to CF(1). It either transmits conformational changes from CF(0) to CF(1) or is implicated in proton conduction. The protein is ATP synthase subunit delta of Acinetobacter baylyi (strain ATCC 33305 / BD413 / ADP1).